We begin with the raw amino-acid sequence, 250 residues long: Ribosomal RNA small subunit methyltransferase J (250 aa).

Residues 101–102 (RD), 117–118 (ER), 153–154 (SS), and D171 each bind S-adenosyl-L-methionine.

It belongs to the methyltransferase superfamily. RsmJ family.

It is found in the cytoplasm. The enzyme catalyses guanosine(1516) in 16S rRNA + S-adenosyl-L-methionine = N(2)-methylguanosine(1516) in 16S rRNA + S-adenosyl-L-homocysteine + H(+). Its function is as follows. Specifically methylates the guanosine in position 1516 of 16S rRNA. This Escherichia fergusonii (strain ATCC 35469 / DSM 13698 / CCUG 18766 / IAM 14443 / JCM 21226 / LMG 7866 / NBRC 102419 / NCTC 12128 / CDC 0568-73) protein is Ribosomal RNA small subunit methyltransferase J.